The primary structure comprises 1527 residues: DNA-directed RNA polymerase subunit beta'' (1527 aa).

Zn(2+) contacts are provided by cysteine 220, cysteine 296, cysteine 303, and cysteine 306. Basic and acidic residues-rich tracts occupy residues 644–661 (RTQE…RTRE) and 671–681 (PENKYRTREGE). 2 disordered regions span residues 644 to 681 (RTQE…REGE) and 712 to 793 (YRTL…KKEG). Acidic residues-rich tracts occupy residues 737–755 (GEYE…SSED) and 763–786 (TLEE…PEED).

It belongs to the RNA polymerase beta' chain family. RpoC2 subfamily. In terms of assembly, in plastids the minimal PEP RNA polymerase catalytic core is composed of four subunits: alpha, beta, beta', and beta''. When a (nuclear-encoded) sigma factor is associated with the core the holoenzyme is formed, which can initiate transcription. It depends on Zn(2+) as a cofactor.

Its subcellular location is the plastid. The protein resides in the chloroplast. It catalyses the reaction RNA(n) + a ribonucleoside 5'-triphosphate = RNA(n+1) + diphosphate. DNA-dependent RNA polymerase catalyzes the transcription of DNA into RNA using the four ribonucleoside triphosphates as substrates. This Zea mays (Maize) protein is DNA-directed RNA polymerase subunit beta''.